The primary structure comprises 57 residues: MATPSNKNSKSHKRNRRGHIGLNVPNIVLDQTTGEYRVSHRVSPSGVYNGKQVIDKK.

The disordered stretch occupies residues 1 to 25; it reads MATPSNKNSKSHKRNRRGHIGLNVP. Over residues 9–19 the composition is skewed to basic residues; the sequence is SKSHKRNRRGH.

This sequence belongs to the bacterial ribosomal protein bL32 family.

This is Large ribosomal subunit protein bL32 from Leuconostoc mesenteroides subsp. mesenteroides (strain ATCC 8293 / DSM 20343 / BCRC 11652 / CCM 1803 / JCM 6124 / NCDO 523 / NBRC 100496 / NCIMB 8023 / NCTC 12954 / NRRL B-1118 / 37Y).